The primary structure comprises 122 residues: Large ribosomal subunit protein bL12 (122 aa).

It belongs to the bacterial ribosomal protein bL12 family. Homodimer. Part of the ribosomal stalk of the 50S ribosomal subunit. Forms a multimeric L10(L12)X complex, where L10 forms an elongated spine to which 2 to 4 L12 dimers bind in a sequential fashion. Binds GTP-bound translation factors.

Forms part of the ribosomal stalk which helps the ribosome interact with GTP-bound translation factors. Is thus essential for accurate translation. This Clostridium botulinum (strain Langeland / NCTC 10281 / Type F) protein is Large ribosomal subunit protein bL12.